Here is a 130-residue protein sequence, read N- to C-terminus: Anti-adapter protein IraD (130 aa).

This sequence belongs to the GpW/Gp25 family. IraD subfamily. As to quaternary structure, interacts with RssB.

The protein localises to the cytoplasm. In terms of biological role, inhibits RpoS proteolysis by regulating RssB activity, thereby increasing the stability of the sigma stress factor RpoS during oxidative stress. Its effect on RpoS stability is due to its interaction with RssB, which probably blocks the interaction of RssB with RpoS, and the consequent delivery of the RssB-RpoS complex to the ClpXP protein degradation pathway. The chain is Anti-adapter protein IraD from Escherichia coli O9:H4 (strain HS).